The sequence spans 645 residues: Acetyl-coenzyme A synthetase (645 aa).

CoA is bound by residues 190–193 (RGSK), Thr308, and Asn332. ATP contacts are provided by residues 384-386 (GEP), 408-413 (DTWWQT), Asp497, and Arg512. Residue Ser520 coordinates CoA. An ATP-binding site is contributed by Arg523. Mg(2+)-binding residues include Val534, His536, and Val539. Arg581 is a CoA binding site. Lys606 carries the post-translational modification N6-acetyllysine.

Belongs to the ATP-dependent AMP-binding enzyme family. The cofactor is Mg(2+). Post-translationally, acetylated. Deacetylation by the SIR2-homolog deacetylase activates the enzyme.

It catalyses the reaction acetate + ATP + CoA = acetyl-CoA + AMP + diphosphate. Its function is as follows. Catalyzes the conversion of acetate into acetyl-CoA (AcCoA), an essential intermediate at the junction of anabolic and catabolic pathways. AcsA undergoes a two-step reaction. In the first half reaction, AcsA combines acetate with ATP to form acetyl-adenylate (AcAMP) intermediate. In the second half reaction, it can then transfer the acetyl group from AcAMP to the sulfhydryl group of CoA, forming the product AcCoA. The protein is Acetyl-coenzyme A synthetase of Bdellovibrio bacteriovorus (strain ATCC 15356 / DSM 50701 / NCIMB 9529 / HD100).